A 364-amino-acid chain; its full sequence is MNRASLKRSKILHMALMGTSDPSGEAEASQEKPFVLRALQIALVVSLYWVTSISMVFLNKYLLDSPSLRLDTPIFVTFYQCLVTVLLCKGLSSLATCCPGTVDFPALHLDLKVARSVLPLSVVFIGMITFNNLCLKYVGVAFYNVGRSLTTVFNVLLSYLLLKQTTSFYALLTCSVIIGGFWLGVDQEGAEGTLSWTGTLFGVLASLCVSLNAIYTKKVLPAVDGSIWRLTFYNNANACVLFLPLLLALGELRALLAFPQLGSAHFWAMMTLGGLFGFAIGYVTGLQIKFTSPLTHNVSGTAKACAQTVLAVLYYEEAKSFLWWTSNMMVLGGSSAYTWVRGREMKKTQEEPHPRENEKSNMEV.

A run of 8 helical transmembrane segments spans residues 34 to 56, 76 to 98, 111 to 130, 140 to 162, 167 to 185, 195 to 214, 227 to 249, and 264 to 286; these read FVLR…ISMV, VTFY…ATCC, LKVA…MITF, VAFY…YLLL, SFYA…WLGV, SWTG…LNAI, IWRL…LLAL, and AHFW…VTGL. Positions 345-364 are disordered; sequence MKKTQEEPHPRENEKSNMEV.

It belongs to the TPT transporter family. SLC35C subfamily.

The protein localises to the golgi apparatus membrane. The enzyme catalyses GMP(out) + GDP-beta-L-fucose(in) = GMP(in) + GDP-beta-L-fucose(out). Its function is as follows. Antiporter specific for GDP-l-fucose and depending on the concomitant reverse transport of GMP. Involved in GDP-fucose import from the cytoplasm into the Golgi lumen. In Bos taurus (Bovine), this protein is GDP-fucose transporter 1 (SLC35C1).